A 788-amino-acid polypeptide reads, in one-letter code: Probable phosphoketolase 1 (788 aa).

This sequence belongs to the XFP family. Requires thiamine diphosphate as cofactor.

This Lactiplantibacillus plantarum (strain ATCC BAA-793 / NCIMB 8826 / WCFS1) (Lactobacillus plantarum) protein is Probable phosphoketolase 1.